Reading from the N-terminus, the 792-residue chain is Phenylalanine--tRNA ligase beta subunit (792 aa).

In terms of domain architecture, tRNA-binding spans 39-147 (GESLGQVVVA…DDAPVGQALA (109 aa)). In terms of domain architecture, B5 spans 400–475 (PQPARILLRR…RIHGYDRVPT (76 aa)). Residues D453, D459, E462, and D463 each coordinate Mg(2+). Residues 698–791 (SRFPSVRRDL…IEREHRARIR (94 aa)) form the FDX-ACB domain.

This sequence belongs to the phenylalanyl-tRNA synthetase beta subunit family. Type 1 subfamily. As to quaternary structure, tetramer of two alpha and two beta subunits. It depends on Mg(2+) as a cofactor.

It is found in the cytoplasm. The enzyme catalyses tRNA(Phe) + L-phenylalanine + ATP = L-phenylalanyl-tRNA(Phe) + AMP + diphosphate + H(+). The polypeptide is Phenylalanine--tRNA ligase beta subunit (Xanthomonas oryzae pv. oryzae (strain MAFF 311018)).